The following is a 648-amino-acid chain: Cysteine-rich receptor-like protein kinase 38 (648 aa).

The first 25 residues, 1-25 (MKNSAAIFLTSSLILLLQTLHGVKA), serve as a signal peptide directing secretion. 2 consecutive Gnk2-homologous domains span residues 26–127 (GFIC…DQST) and 140–247 (PSPV…FYPF). Residues 26 to 278 (GFICVGSSFP…EAISITRLKG (253 aa)) lie on the Extracellular side of the membrane. N-linked (GlcNAc...) asparagine glycans are attached at residues asparagine 37, asparagine 63, asparagine 151, asparagine 174, and asparagine 253. The chain crosses the membrane as a helical span at residues 279–299 (GIIAIFVVPIVINLLVFIGLI). Residues 300–648 (RAYTRIRKSY…ELSITELSPR (349 aa)) are Cytoplasmic-facing. The Protein kinase domain occupies 339 to 611 (FSFENKIGQG…VIQWLGSETI (273 aa)). ATP contacts are provided by residues 345 to 353 (IGQGGFGSV) and lysine 367. Tyrosine 412 is modified (phosphotyrosine). Catalysis depends on aspartate 464, which acts as the Proton acceptor. Serine 468 is modified (phosphoserine). Phosphothreonine is present on threonine 504. Tyrosine 512 carries the post-translational modification Phosphotyrosine.

This sequence belongs to the protein kinase superfamily. Ser/Thr protein kinase family. CRK subfamily.

The protein localises to the membrane. It carries out the reaction L-seryl-[protein] + ATP = O-phospho-L-seryl-[protein] + ADP + H(+). It catalyses the reaction L-threonyl-[protein] + ATP = O-phospho-L-threonyl-[protein] + ADP + H(+). This is Cysteine-rich receptor-like protein kinase 38 (CRK38) from Arabidopsis thaliana (Mouse-ear cress).